A 186-amino-acid polypeptide reads, in one-letter code: Threonylcarbamoyl-AMP synthase (186 aa).

Positions 5-186 (LLTIKAAAKL…WEAQTQKRLR (182 aa)) constitute a YrdC-like domain.

It belongs to the SUA5 family. TsaC subfamily.

The protein resides in the cytoplasm. It catalyses the reaction L-threonine + hydrogencarbonate + ATP = L-threonylcarbamoyladenylate + diphosphate + H2O. Required for the formation of a threonylcarbamoyl group on adenosine at position 37 (t(6)A37) in tRNAs that read codons beginning with adenine. Catalyzes the conversion of L-threonine, HCO(3)(-)/CO(2) and ATP to give threonylcarbamoyl-AMP (TC-AMP) as the acyladenylate intermediate, with the release of diphosphate. The chain is Threonylcarbamoyl-AMP synthase from Hydrogenovibrio crunogenus (strain DSM 25203 / XCL-2) (Thiomicrospira crunogena).